An 81-amino-acid polypeptide reads, in one-letter code: Photosystem I iron-sulfur center (81 aa).

4Fe-4S ferredoxin-type domains follow at residues 2–31 and 39–68; these read SHSV…MVAW and IASA…VRVY. Cys11, Cys14, Cys17, Cys21, Cys48, Cys51, Cys54, and Cys58 together coordinate [4Fe-4S] cluster.

In terms of assembly, the eukaryotic PSI reaction center is composed of at least 11 subunits. [4Fe-4S] cluster is required as a cofactor.

It localises to the plastid. The protein resides in the chloroplast thylakoid membrane. The enzyme catalyses reduced [plastocyanin] + hnu + oxidized [2Fe-2S]-[ferredoxin] = oxidized [plastocyanin] + reduced [2Fe-2S]-[ferredoxin]. Functionally, apoprotein for the two 4Fe-4S centers FA and FB of photosystem I (PSI); essential for photochemical activity. FB is the terminal electron acceptor of PSI, donating electrons to ferredoxin. The C-terminus interacts with PsaA/B/D and helps assemble the protein into the PSI complex. Required for binding of PsaD and PsaE to PSI. PSI is a plastocyanin/cytochrome c6-ferredoxin oxidoreductase, converting photonic excitation into a charge separation, which transfers an electron from the donor P700 chlorophyll pair to the spectroscopically characterized acceptors A0, A1, FX, FA and FB in turn. The chain is Photosystem I iron-sulfur center from Guillardia theta (Cryptophyte).